Consider the following 330-residue polypeptide: Putative [LysW]-L-2-aminoadipate/[LysW]-L-glutamate phosphate reductase (330 aa).

NADP(+) is bound by residues 10-13 (SGYI) and 34-36 (SRK). The active site involves Cys-142. Asn-297 lines the NADP(+) pocket.

This sequence belongs to the NAGSA dehydrogenase family. Type 1 subfamily. LysY sub-subfamily.

The protein resides in the cytoplasm. The enzyme catalyses [amino-group carrier protein]-C-terminal-N-(1-carboxy-5-oxopentan-1-yl)-L-glutamine + phosphate + NADP(+) = [amino-group carrier protein]-C-terminal-N-(1-carboxy-5-phosphooxy-5-oxopentan-1-yl)-L-glutamine + NADPH + H(+). The catalysed reaction is [amino-group carrier protein]-C-terminal-gamma-(L-glutamyl-5-semialdehyde)-L-glutamate + phosphate + NADP(+) = [amino-group carrier protein]-C-terminal-gamma-(5-phospho-L-glutamyl)-L-glutamate + NADPH + H(+). Its pathway is amino-acid biosynthesis; L-lysine biosynthesis via AAA pathway; L-lysine from L-alpha-aminoadipate (Thermus route): step 3/5. It participates in amino-acid biosynthesis; L-arginine biosynthesis. Involved in both the arginine and lysine biosynthetic pathways. In Pyrococcus abyssi (strain GE5 / Orsay), this protein is Putative [LysW]-L-2-aminoadipate/[LysW]-L-glutamate phosphate reductase.